We begin with the raw amino-acid sequence, 265 residues long: 4-hydroxy-tetrahydrodipicolinate reductase (265 aa).

NAD(+) contacts are provided by residues G7 to M12, D33, G96 to T98, and A120 to F123. H153 acts as the Proton donor/acceptor in catalysis. H154 contacts (S)-2,3,4,5-tetrahydrodipicolinate. Catalysis depends on K157, which acts as the Proton donor. G163–T164 is a binding site for (S)-2,3,4,5-tetrahydrodipicolinate.

The protein belongs to the DapB family.

It localises to the cytoplasm. The catalysed reaction is (S)-2,3,4,5-tetrahydrodipicolinate + NAD(+) + H2O = (2S,4S)-4-hydroxy-2,3,4,5-tetrahydrodipicolinate + NADH + H(+). The enzyme catalyses (S)-2,3,4,5-tetrahydrodipicolinate + NADP(+) + H2O = (2S,4S)-4-hydroxy-2,3,4,5-tetrahydrodipicolinate + NADPH + H(+). It functions in the pathway amino-acid biosynthesis; L-lysine biosynthesis via DAP pathway; (S)-tetrahydrodipicolinate from L-aspartate: step 4/4. In terms of biological role, catalyzes the conversion of 4-hydroxy-tetrahydrodipicolinate (HTPA) to tetrahydrodipicolinate. This chain is 4-hydroxy-tetrahydrodipicolinate reductase, found in Cupriavidus necator (strain ATCC 17699 / DSM 428 / KCTC 22496 / NCIMB 10442 / H16 / Stanier 337) (Ralstonia eutropha).